A 222-amino-acid polypeptide reads, in one-letter code: Protein-L-isoaspartate O-methyltransferase (222 aa).

The active site involves Ser68.

Belongs to the methyltransferase superfamily. L-isoaspartyl/D-aspartyl protein methyltransferase family.

It localises to the cytoplasm. The catalysed reaction is [protein]-L-isoaspartate + S-adenosyl-L-methionine = [protein]-L-isoaspartate alpha-methyl ester + S-adenosyl-L-homocysteine. In terms of biological role, catalyzes the methyl esterification of L-isoaspartyl residues in peptides and proteins that result from spontaneous decomposition of normal L-aspartyl and L-asparaginyl residues. It plays a role in the repair and/or degradation of damaged proteins. The chain is Protein-L-isoaspartate O-methyltransferase from Koribacter versatilis (strain Ellin345).